We begin with the raw amino-acid sequence, 819 residues long: Ent-beyerene synthase KSL2, chloroplastic (819 aa).

The transit peptide at 1-58 directs the protein to the chloroplast; the sequence is MLPCLFPAYGSVVACKPSAIDRSPFGLLSQPKQTNRTLIRRPKVTKAFMAIEAMRHCS. A compositionally biased stretch (low complexity) spans 58–76; the sequence is SSSSSSEEGGAAATTAARS. A disordered region spans residues 58–77; the sequence is SSSSSSEEGGAAATTAARSA. Mg(2+)-binding residues include aspartate 567, aspartate 571, asparagine 711, serine 715, and glutamate 719. A DDXXD motif motif is present at residues 567-571; it reads DDFFD.

It belongs to the terpene synthase family. Mg(2+) is required as a cofactor. As to expression, expressed in roots. Highly expressed in stems, flowers and panicle.

Its subcellular location is the plastid. It localises to the chloroplast. The catalysed reaction is ent-copalyl diphosphate = ent-beyerene + diphosphate. It catalyses the reaction ent-copalyl diphosphate = ent-kaur-16-ene + diphosphate. Its pathway is secondary metabolite biosynthesis; terpenoid biosynthesis. Its function is as follows. Diterpene cyclase involved in jasmonic acid-dependent defense mechanisms in roots by mediating the biosynthesis of labdane-related diterpenoids (LRDs) natural products such as ent-beyerene, an antimicrobial compound. Catalyzes the cyclization of ent-CDP into ent-beyerene as a major and ent-kaurene as a minor product. May be involved in the catalysis of an early step of the gibberellin (GA) biosynthesis pathway. The sequence is that of Ent-beyerene synthase KSL2, chloroplastic from Oryza sativa subsp. japonica (Rice).